The chain runs to 101 residues: Small ribosomal subunit protein uS14 (101 aa).

The protein belongs to the universal ribosomal protein uS14 family. In terms of assembly, part of the 30S ribosomal subunit. Contacts proteins S3 and S10.

In terms of biological role, binds 16S rRNA, required for the assembly of 30S particles and may also be responsible for determining the conformation of the 16S rRNA at the A site. This is Small ribosomal subunit protein uS14 from Cronobacter sakazakii (strain ATCC BAA-894) (Enterobacter sakazakii).